A 158-amino-acid chain; its full sequence is MKTPLVTREGYEKLKQELNYLWREERPEVTKKVTWAASLGDRSENADYQYNKKRLREIDRRVRYLTKCMENLKIVDYSPQQEGKVFFGAWVEIENDDGVTHRFRIVGYDEIFGRKDYISIDSPMARALLKKEVGDLAVVNTPAGEASWYVNAIEYVKP.

The protein belongs to the GreA/GreB family. GreB subfamily.

Necessary for efficient RNA polymerase transcription elongation past template-encoded arresting sites. The arresting sites in DNA have the property of trapping a certain fraction of elongating RNA polymerases that pass through, resulting in locked ternary complexes. Cleavage of the nascent transcript by cleavage factors such as GreA or GreB allows the resumption of elongation from the new 3'terminus. GreB releases sequences of up to 9 nucleotides in length. This chain is Transcription elongation factor GreB, found in Escherichia coli O157:H7.